The following is a 405-amino-acid chain: Arginine biosynthesis bifunctional protein ArgJ (405 aa).

6 residues coordinate substrate: Thr152, Lys178, Thr189, Glu276, Asn400, and Thr405. Catalysis depends on Thr189, which acts as the Nucleophile.

Belongs to the ArgJ family. In terms of assembly, heterotetramer of two alpha and two beta chains.

It is found in the cytoplasm. It carries out the reaction N(2)-acetyl-L-ornithine + L-glutamate = N-acetyl-L-glutamate + L-ornithine. The catalysed reaction is L-glutamate + acetyl-CoA = N-acetyl-L-glutamate + CoA + H(+). The protein operates within amino-acid biosynthesis; L-arginine biosynthesis; L-ornithine and N-acetyl-L-glutamate from L-glutamate and N(2)-acetyl-L-ornithine (cyclic): step 1/1. It functions in the pathway amino-acid biosynthesis; L-arginine biosynthesis; N(2)-acetyl-L-ornithine from L-glutamate: step 1/4. Catalyzes two activities which are involved in the cyclic version of arginine biosynthesis: the synthesis of N-acetylglutamate from glutamate and acetyl-CoA as the acetyl donor, and of ornithine by transacetylation between N(2)-acetylornithine and glutamate. The polypeptide is Arginine biosynthesis bifunctional protein ArgJ (Pseudomonas savastanoi pv. phaseolicola (strain 1448A / Race 6) (Pseudomonas syringae pv. phaseolicola (strain 1448A / Race 6))).